We begin with the raw amino-acid sequence, 480 residues long: Protein nucleotidyltransferase YdiU (480 aa).

ATP is bound by residues glycine 87, glycine 89, arginine 90, lysine 110, aspartate 122, glycine 123, arginine 173, and arginine 180. Residue aspartate 249 is the Proton acceptor of the active site. Positions 250 and 259 each coordinate Mg(2+). Aspartate 259 is a binding site for ATP.

The protein belongs to the SELO family. Mg(2+) is required as a cofactor. It depends on Mn(2+) as a cofactor.

The enzyme catalyses L-seryl-[protein] + ATP = 3-O-(5'-adenylyl)-L-seryl-[protein] + diphosphate. It carries out the reaction L-threonyl-[protein] + ATP = 3-O-(5'-adenylyl)-L-threonyl-[protein] + diphosphate. It catalyses the reaction L-tyrosyl-[protein] + ATP = O-(5'-adenylyl)-L-tyrosyl-[protein] + diphosphate. The catalysed reaction is L-histidyl-[protein] + UTP = N(tele)-(5'-uridylyl)-L-histidyl-[protein] + diphosphate. The enzyme catalyses L-seryl-[protein] + UTP = O-(5'-uridylyl)-L-seryl-[protein] + diphosphate. It carries out the reaction L-tyrosyl-[protein] + UTP = O-(5'-uridylyl)-L-tyrosyl-[protein] + diphosphate. Its function is as follows. Nucleotidyltransferase involved in the post-translational modification of proteins. It can catalyze the addition of adenosine monophosphate (AMP) or uridine monophosphate (UMP) to a protein, resulting in modifications known as AMPylation and UMPylation. The sequence is that of Protein nucleotidyltransferase YdiU from Anoxybacillus flavithermus (strain DSM 21510 / WK1).